A 555-amino-acid chain; its full sequence is CTP synthase (555 aa).

Residues 1-279 form an amidoligase domain region; it reads MATNRAKSST…DNYIIRRLNL (279 aa). Ser21 lines the CTP pocket. Ser21 contributes to the UTP binding site. ATP-binding positions include 22–27 and Asp79; that span reads SLGKGL. Mg(2+)-binding residues include Asp79 and Glu153. CTP-binding positions include 160–162, 200–205, and Lys236; these read DIE and KTKPTQ. UTP is bound by residues 200–205 and Lys236; that span reads KTKPTQ. Residues 304-553 enclose the Glutamine amidotransferase type-1 domain; it reads TIGIVGKYID…VDAALKHQAG (250 aa). Position 367 (Gly367) interacts with L-glutamine. Cys394 acts as the Nucleophile; for glutamine hydrolysis in catalysis. L-glutamine is bound by residues 395–398, Glu417, and Arg478; that span reads LGLQ. Active-site residues include His526 and Glu528.

The protein belongs to the CTP synthase family. As to quaternary structure, homotetramer.

The catalysed reaction is UTP + L-glutamine + ATP + H2O = CTP + L-glutamate + ADP + phosphate + 2 H(+). It carries out the reaction L-glutamine + H2O = L-glutamate + NH4(+). It catalyses the reaction UTP + NH4(+) + ATP = CTP + ADP + phosphate + 2 H(+). It functions in the pathway pyrimidine metabolism; CTP biosynthesis via de novo pathway; CTP from UDP: step 2/2. Allosterically activated by GTP, when glutamine is the substrate; GTP has no effect on the reaction when ammonia is the substrate. The allosteric effector GTP functions by stabilizing the protein conformation that binds the tetrahedral intermediate(s) formed during glutamine hydrolysis. Inhibited by the product CTP, via allosteric rather than competitive inhibition. In terms of biological role, catalyzes the ATP-dependent amination of UTP to CTP with either L-glutamine or ammonia as the source of nitrogen. Regulates intracellular CTP levels through interactions with the four ribonucleotide triphosphates. The polypeptide is CTP synthase (Corynebacterium jeikeium (strain K411)).